The sequence spans 165 residues: Neurotrophin-3 (165 aa).

An N-terminal signal peptide occupies residues 1-3; the sequence is IQS. Positions 4–119 are excised as a propeptide; the sequence is TSMDQGSLTE…VLNRTSRRKR (116 aa). A glycan (N-linked (GlcNAc...) asparagine) is linked at Asn112.

Belongs to the NGF-beta family.

It localises to the secreted. Its function is as follows. Seems to promote the survival of visceral and proprioceptive sensory neurons. The chain is Neurotrophin-3 (NTF3) from Calabaria reinhardtii (Calabar boa).